The sequence spans 885 residues: DNA mismatch repair protein MutS (885 aa).

626-633 (GPNMGGKS) provides a ligand contact to ATP.

The protein belongs to the DNA mismatch repair MutS family.

Its function is as follows. This protein is involved in the repair of mismatches in DNA. It is possible that it carries out the mismatch recognition step. This protein has a weak ATPase activity. This chain is DNA mismatch repair protein MutS, found in Burkholderia cenocepacia (strain ATCC BAA-245 / DSM 16553 / LMG 16656 / NCTC 13227 / J2315 / CF5610) (Burkholderia cepacia (strain J2315)).